A 552-amino-acid polypeptide reads, in one-letter code: Enhanced filamentous growth protein (552 aa).

Disordered regions lie at residues asparagine 17–glutamine 48, glutamine 70–glutamine 93, and glutamine 121–proline 180. Over residues glutamine 121–threonine 151 the composition is skewed to polar residues. The HTH APSES-type domain maps to arginine 204–glycine 310. The segment at residues glycine 238–glutamate 259 is a DNA-binding region (H-T-H motif). 3 disordered regions span residues threonine 327–asparagine 384, glutamine 410–methionine 447, and serine 478–lysine 552. Residues alanine 340–serine 381 show a composition bias toward low complexity. Residues lysine 419 to aspartate 434 show a composition bias toward polar residues. Low complexity-rich tracts occupy residues glutamine 435 to methionine 447 and serine 478 to glutamine 504. Residues serine 516 to threonine 546 are compositionally biased toward polar residues.

It belongs to the EFG1/PHD1/stuA family.

Its subcellular location is the nucleus. Putative transcription factor that stimulates pseudohyphal morphogenesis. In Candida albicans (Yeast), this protein is Enhanced filamentous growth protein (EFG1).